Here is a 236-residue protein sequence, read N- to C-terminus: NAD(P)H-hydrate epimerase (236 aa).

The YjeF N-terminal domain maps to 11–217 (AAALDRELMS…SIAKKYDFDV (207 aa)). A (6S)-NADPHX-binding site is contributed by 61 to 65 (NNGGD). Residues Asn62 and Asp123 each coordinate K(+). (6S)-NADPHX is bound by residues 127-133 (GFSFSGE) and Asp156. A K(+)-binding site is contributed by Ser159.

It belongs to the NnrE/AIBP family. Requires K(+) as cofactor.

It localises to the cytoplasm. It is found in the mitochondrion. The catalysed reaction is (6R)-NADHX = (6S)-NADHX. It catalyses the reaction (6R)-NADPHX = (6S)-NADPHX. Catalyzes the epimerization of the S- and R-forms of NAD(P)HX, a damaged form of NAD(P)H that is a result of enzymatic or heat-dependent hydration. This is a prerequisite for the S-specific NAD(P)H-hydrate dehydratase to allow the repair of both epimers of NAD(P)HX. The polypeptide is NAD(P)H-hydrate epimerase (Neurospora crassa (strain ATCC 24698 / 74-OR23-1A / CBS 708.71 / DSM 1257 / FGSC 987)).